Here is a 274-residue protein sequence, read N- to C-terminus: Large ribosomal subunit protein uL2 (274 aa).

2 disordered regions span residues 36–61 (QKSK…HKQR) and 223–274 (VAMN…RRKR). The segment covering 37 to 46 (KSKTGGRNSN) has biased composition (polar residues). 2 stretches are compositionally biased toward basic residues: residues 50 to 61 (TTRHRGGGHKQR) and 254 to 274 (KGHK…RRKR).

It belongs to the universal ribosomal protein uL2 family. As to quaternary structure, part of the 50S ribosomal subunit. Forms a bridge to the 30S subunit in the 70S ribosome.

One of the primary rRNA binding proteins. Required for association of the 30S and 50S subunits to form the 70S ribosome, for tRNA binding and peptide bond formation. It has been suggested to have peptidyltransferase activity; this is somewhat controversial. Makes several contacts with the 16S rRNA in the 70S ribosome. This is Large ribosomal subunit protein uL2 from Halorhodospira halophila (strain DSM 244 / SL1) (Ectothiorhodospira halophila (strain DSM 244 / SL1)).